We begin with the raw amino-acid sequence, 446 residues long: Calcium-binding and coiled-coil domain-containing protein 2 (446 aa).

The CLIR signature appears at 133–136 (ILVV). Positions 137 to 349 (TTQGEVEEIE…RENSRLLSYM (213 aa)) form a coiled coil. The LIR-like motif lies at 203–206 (DYWE). The interaction with LGALS8 stretch occupies residues 371–381 (NPGLVYGNPYS). The interaction with MYO6 stretch occupies residues 395–446 (KKCPICKADDICDHILEQQQMQPLCLNCPICDKIFPATEKQIFEDHVFCHSL). The UBZ1-type zinc-finger motif lies at 419-444 (CLNCPICDKIFPATEKQIFEDHVFCH). Residues Cys-422, Cys-425, His-440, and His-444 each contribute to the Zn(2+) site. Position 445 is a phosphoserine (Ser-445).

Belongs to the CALCOCO family. In terms of assembly, dimer. Part of a complex consisting of CALCOCO2, TAX1BP1 and MYO6. Interacts with MYO6. Interacts with GEMIN4. Interacts with ATG8 family members MAP1LC3A, MAP1LC3B, GABARAP, GABARAPL1 and GABARAPL2. Interacts with ATG8 family member MAP1LC3C. Interacts with LGALS8. Interacts with TOM1; the interaction is indirect and is mediated by MYO6, which acts as a bridge between TOM1 and CALCOCO2. Interacts with AZI2.

Its subcellular location is the cytoplasm. It is found in the perinuclear region. The protein localises to the cytoskeleton. It localises to the cytoplasmic vesicle. The protein resides in the autophagosome membrane. Its function is as follows. Xenophagy-specific receptor required for autophagy-mediated intracellular bacteria degradation. Acts as an effector protein of galectin-sensed membrane damage that restricts the proliferation of infecting pathogens upon entry into the cytosol by targeting LGALS8-associated bacteria for autophagy. Initially orchestrates bacteria targeting to autophagosomes and subsequently ensures pathogen degradation by regulating pathogen-containing autophagosome maturation. Bacteria targeting to autophagosomes relies on its interaction with MAP1LC3A, MAP1LC3B and/or GABARAPL2, whereas regulation of pathogen-containing autophagosome maturation requires the interaction with MAP3LC3C. May play a role in ruffle formation and actin cytoskeleton organization and seems to negatively regulate constitutive secretion. The protein is Calcium-binding and coiled-coil domain-containing protein 2 of Pongo abelii (Sumatran orangutan).